The following is an 82-amino-acid chain: Small ribosomal subunit protein bS16 (82 aa).

It belongs to the bacterial ribosomal protein bS16 family.

This chain is Small ribosomal subunit protein bS16, found in Klebsiella pneumoniae (strain 342).